Reading from the N-terminus, the 280-residue chain is 3-hydroxyanthranilate 3,4-dioxygenase (280 aa).

Positions 1–160 (MAIPVNVKKW…SEQYKSGKPD (160 aa)) are domain A (catalytic). Residue Arg43 coordinates O2. Fe cation is bound by residues His47, Glu53, and His91. Residue Glu53 participates in substrate binding. Substrate contacts are provided by Arg95 and Glu105. The interval 161–177 (PAQPIGKMPFFLNTEQV) is linker. Residues 178–280 (MEPFSFQNWL…IALSTSQVPA (103 aa)) form a domain B region.

The protein belongs to the 3-HAO family. As to quaternary structure, monomer. Requires Fe(2+) as cofactor.

Its subcellular location is the cytoplasm. It localises to the cytosol. It catalyses the reaction 3-hydroxyanthranilate + O2 = (2Z,4Z)-2-amino-3-carboxymuconate 6-semialdehyde. Its pathway is cofactor biosynthesis; NAD(+) biosynthesis; quinolinate from L-kynurenine: step 3/3. Functionally, catalyzes the oxidative ring opening of 3-hydroxyanthranilate to 2-amino-3-carboxymuconate semialdehyde, which spontaneously cyclizes to quinolinate. The sequence is that of 3-hydroxyanthranilate 3,4-dioxygenase (haao) from Xenopus tropicalis (Western clawed frog).